The primary structure comprises 396 residues: Elongation factor Tu (396 aa).

Residues 11-205 (KPHVNIGTIG…TVDEYVPTPE (195 aa)) form the tr-type G domain. Residues 20-27 (GHVDHGKT) are G1. 20-27 (GHVDHGKT) lines the GTP pocket. Mg(2+) is bound at residue T27. A G2 region spans residues 61-65 (GITIN). The G3 stretch occupies residues 82–85 (DAPG). Residues 82 to 86 (DAPGH) and 137 to 140 (NKTD) each bind GTP. A G4 region spans residues 137 to 140 (NKTD). A G5 region spans residues 175 to 177 (SAL).

It belongs to the TRAFAC class translation factor GTPase superfamily. Classic translation factor GTPase family. EF-Tu/EF-1A subfamily. Monomer.

Its subcellular location is the cytoplasm. The enzyme catalyses GTP + H2O = GDP + phosphate + H(+). Functionally, GTP hydrolase that promotes the GTP-dependent binding of aminoacyl-tRNA to the A-site of ribosomes during protein biosynthesis. The protein is Elongation factor Tu of Latilactobacillus sakei subsp. sakei (strain 23K) (Lactobacillus sakei subsp. sakei).